The primary structure comprises 184 residues: Sec-independent protein translocase protein TatB (184 aa).

The chain crosses the membrane as a helical span at residues 1–21 (MFDIGFSELVLLFVVGLIVLG). The span at 149–168 (AEEGEPMLEMGESDFSEDEQ) shows a compositional bias: acidic residues. The tract at residues 149–184 (AEEGEPMLEMGESDFSEDEQATASSNETIENIKEKV) is disordered.

Belongs to the TatB family. The Tat system comprises two distinct complexes: a TatABC complex, containing multiple copies of TatA, TatB and TatC subunits, and a separate TatA complex, containing only TatA subunits. Substrates initially bind to the TatABC complex, which probably triggers association of the separate TatA complex to form the active translocon.

It is found in the cell inner membrane. In terms of biological role, part of the twin-arginine translocation (Tat) system that transports large folded proteins containing a characteristic twin-arginine motif in their signal peptide across membranes. Together with TatC, TatB is part of a receptor directly interacting with Tat signal peptides. TatB may form an oligomeric binding site that transiently accommodates folded Tat precursor proteins before their translocation. This is Sec-independent protein translocase protein TatB from Histophilus somni (strain 129Pt) (Haemophilus somnus).